A 76-amino-acid chain; its full sequence is Exodeoxyribonuclease 7 small subunit (76 aa).

It belongs to the XseB family. In terms of assembly, heterooligomer composed of large and small subunits.

It localises to the cytoplasm. It carries out the reaction Exonucleolytic cleavage in either 5'- to 3'- or 3'- to 5'-direction to yield nucleoside 5'-phosphates.. Functionally, bidirectionally degrades single-stranded DNA into large acid-insoluble oligonucleotides, which are then degraded further into small acid-soluble oligonucleotides. The sequence is that of Exodeoxyribonuclease 7 small subunit from Geotalea daltonii (strain DSM 22248 / JCM 15807 / FRC-32) (Geobacter daltonii).